Consider the following 418-residue polypeptide: D-amino acid dehydrogenase (418 aa).

An FAD-binding site is contributed by 3–17 (VLVLGAGVAGVSSAW).

This sequence belongs to the DadA oxidoreductase family. FAD is required as a cofactor.

It carries out the reaction a D-alpha-amino acid + A + H2O = a 2-oxocarboxylate + AH2 + NH4(+). It functions in the pathway amino-acid degradation; D-alanine degradation; NH(3) and pyruvate from D-alanine: step 1/1. Oxidative deamination of D-amino acids. The sequence is that of D-amino acid dehydrogenase from Neisseria meningitidis serogroup C (strain 053442).